The following is a 66-amino-acid chain: MEQGTVKWFNAEKGFGFIERENGDDVFVHFSAIQGDGFKSLDEGQAVTFDVEEGQRGPQAANVQKA.

The CSD domain maps to 4–63; that stretch reads GTVKWFNAEKGFGFIERENGDDVFVHFSAIQGDGFKSLDEGQAVTFDVEEGQRGPQAANV.

Homodimer.

The protein resides in the cytoplasm. In Listeria innocua serovar 6a (strain ATCC BAA-680 / CLIP 11262), this protein is Cold shock-like protein CspLA (cspLA).